The chain runs to 712 residues: Polyribonucleotide nucleotidyltransferase (712 aa).

Residues D487 and D493 each coordinate Mg(2+). Residues 554-613 (PRIEVMNIPVDKIREVIGSGGKVIREIVEKTGAKINIEDDGTVKIASSSGKEIEAARKWI) form the KH domain. The 69-residue stretch at 623-691 (GQVYEGTVVK…ERGKVRLSMK (69 aa)) folds into the S1 motif domain.

It belongs to the polyribonucleotide nucleotidyltransferase family. It depends on Mg(2+) as a cofactor.

Its subcellular location is the cytoplasm. It catalyses the reaction RNA(n+1) + phosphate = RNA(n) + a ribonucleoside 5'-diphosphate. Involved in mRNA degradation. Catalyzes the phosphorolysis of single-stranded polyribonucleotides processively in the 3'- to 5'-direction. This chain is Polyribonucleotide nucleotidyltransferase, found in Rhizobium johnstonii (strain DSM 114642 / LMG 32736 / 3841) (Rhizobium leguminosarum bv. viciae).